Consider the following 345-residue polypeptide: Protein-glutamate methylesterase/protein-glutamine glutaminase 1 (345 aa).

A Response regulatory domain is found at Ser-8–Glu-123. A 4-aspartylphosphate modification is found at Asp-59. The CheB-type methylesterase domain maps to Ala-151 to Arg-344. Catalysis depends on residues Ser-163, His-190, and Asp-286.

Belongs to the CheB family. Phosphorylated by CheA. Phosphorylation of the N-terminal regulatory domain activates the methylesterase activity.

The protein localises to the cytoplasm. It carries out the reaction [protein]-L-glutamate 5-O-methyl ester + H2O = L-glutamyl-[protein] + methanol + H(+). The catalysed reaction is L-glutaminyl-[protein] + H2O = L-glutamyl-[protein] + NH4(+). Functionally, involved in chemotaxis. Part of a chemotaxis signal transduction system that modulates chemotaxis in response to various stimuli. Catalyzes the demethylation of specific methylglutamate residues introduced into the chemoreceptors (methyl-accepting chemotaxis proteins or MCP) by CheR. Also mediates the irreversible deamidation of specific glutamine residues to glutamic acid. This Myxococcus xanthus (strain DK1622) protein is Protein-glutamate methylesterase/protein-glutamine glutaminase 1.